The primary structure comprises 496 residues: MKVLVATAEASPFAKRGGLGDVLGALPIAIKKQSEIDIRVVLPGYSAIPSQFKSEFQPIDSIIIPLGWRAQKSRVSSYNFRNVTFYFIENDYYFNREDIYGYFDEAEQFGFFSKAILDIMPLLDFYPDIIHLNDWHTAMVSPLLKYKYAHKTNYNQMKTILTIHNLKYQGIFTPHVLEDFFDLHDHKLQHDPEYLEYHGQISFLKGGLIFSDAITTVSPTYAKEIQSPELGMGVDGLLHKRRDDLYGILNGIDYQDYNPKTDVNIYRNYNLPDEGKTNEKLINKLRLQEDLRLPVSSRVPLIAFINRLVKQKGLDLITYVLPELLESEEVQFVFLGTGDPHYEQYLSYLAEKHQNLSAQIKFDEGLARKIYAASDLFLMPSLFEPCGIGQQIAIRYGSVPIVRKVGGLHDTVYPSISEEGTRGIGFTFESFNAHEMLFTIKEAIQYYHQKAFWQEIINNLTTIDFSWEKSACEYIELYHKLIHRNTNSTRKESYLK.

Lysine 15 is an ADP-alpha-D-glucose binding site.

It belongs to the glycosyltransferase 1 family. Bacterial/plant glycogen synthase subfamily.

It catalyses the reaction [(1-&gt;4)-alpha-D-glucosyl](n) + ADP-alpha-D-glucose = [(1-&gt;4)-alpha-D-glucosyl](n+1) + ADP + H(+). The protein operates within glycan biosynthesis; glycogen biosynthesis. Synthesizes alpha-1,4-glucan chains using ADP-glucose. The polypeptide is Glycogen synthase (Natranaerobius thermophilus (strain ATCC BAA-1301 / DSM 18059 / JW/NM-WN-LF)).